The chain runs to 338 residues: Ketol-acid reductoisomerase (NADP(+)) (338 aa).

The region spanning 1–181 (MKVFYDKDCD…GGGKGGIIET (181 aa)) is the KARI N-terminal Rossmann domain. NADP(+) contacts are provided by residues 24–27 (YGSQ), arginine 47, and serine 52. Residue histidine 107 is part of the active site. NADP(+) is bound at residue glycine 133. The KARI C-terminal knotted domain occupies 182–327 (NFKEETETDL…GQLRAMMPWI (146 aa)). Positions 190, 194, 226, and 230 each coordinate Mg(2+). Position 251 (serine 251) interacts with substrate.

Belongs to the ketol-acid reductoisomerase family. Requires Mg(2+) as cofactor.

The catalysed reaction is (2R)-2,3-dihydroxy-3-methylbutanoate + NADP(+) = (2S)-2-acetolactate + NADPH + H(+). It catalyses the reaction (2R,3R)-2,3-dihydroxy-3-methylpentanoate + NADP(+) = (S)-2-ethyl-2-hydroxy-3-oxobutanoate + NADPH + H(+). Its pathway is amino-acid biosynthesis; L-isoleucine biosynthesis; L-isoleucine from 2-oxobutanoate: step 2/4. It functions in the pathway amino-acid biosynthesis; L-valine biosynthesis; L-valine from pyruvate: step 2/4. Functionally, involved in the biosynthesis of branched-chain amino acids (BCAA). Catalyzes an alkyl-migration followed by a ketol-acid reduction of (S)-2-acetolactate (S2AL) to yield (R)-2,3-dihydroxy-isovalerate. In the isomerase reaction, S2AL is rearranged via a Mg-dependent methyl migration to produce 3-hydroxy-3-methyl-2-ketobutyrate (HMKB). In the reductase reaction, this 2-ketoacid undergoes a metal-dependent reduction by NADPH to yield (R)-2,3-dihydroxy-isovalerate. The polypeptide is Ketol-acid reductoisomerase (NADP(+)) (Delftia acidovorans (strain DSM 14801 / SPH-1)).